The chain runs to 113 residues: UPF0145 protein TK1926 (113 aa).

Belongs to the UPF0145 family.

The sequence is that of UPF0145 protein TK1926 from Thermococcus kodakarensis (strain ATCC BAA-918 / JCM 12380 / KOD1) (Pyrococcus kodakaraensis (strain KOD1)).